The chain runs to 1313 residues: Mitogen-activated protein kinase kinase kinase 15 (1313 aa).

Positions 1–58 (MESGGGNAPAGALGAASESPQCPPPPGVEGAAGPAEPDGAAEGAAGGSGEGESGGGPR) are disordered. The segment covering 28 to 43 (VEGAAGPAEPDGAAEG) has biased composition (low complexity). Over residues 44 to 57 (AAGGSGEGESGGGP) the composition is skewed to gly residues. Positions 652-908 (NGERVVLGKG…TAELLREGFL (257 aa)) constitute a Protein kinase domain. Residues 658–666 (LGKGTYGIV) and Lys-681 contribute to the ATP site. The Proton acceptor role is filled by Asp-773. The tract at residues 939–958 (EPMATSSSEHGSVSPDSDAQ) is disordered. The span at 942 to 955 (ATSSSEHGSVSPDS) shows a compositional bias: polar residues. At Ser-994 the chain carries Phosphoserine. A coiled-coil region spans residues 1179 to 1225 (QLGELRQETNRLLEHLVEKEREYQNLLRQTLEQKTQELYHLQLKLKS).

This sequence belongs to the protein kinase superfamily. STE Ser/Thr protein kinase family. MAP kinase kinase kinase subfamily. It depends on Mg(2+) as a cofactor. As to expression, isoform 2 and isoform 3 are widely expressed. Isoform 2 highest levels are observed in fetal brain, and isoform 3 highest levels in pancreas, peripheral blood leukocytes, fetal brain and spleen.

It carries out the reaction L-seryl-[protein] + ATP = O-phospho-L-seryl-[protein] + ADP + H(+). The catalysed reaction is L-threonyl-[protein] + ATP = O-phospho-L-threonyl-[protein] + ADP + H(+). With respect to regulation, contains an N-terminal autoinhibitory domain. Activated by phosphorylation at Thr-812, inhibited by phosphorylation at Ser-924 and Ser-994. In terms of biological role, serine/threonine kinase which acts as a component of the MAP kinase signal transduction pathway. Once activated, acts as an upstream activator of the p38 MAPK signal transduction cascade through the phosphorylation and activation of several MAP kinase kinases. May function in a signal transduction pathway that is activated by various cell stresses and leads to apoptosis. Involved in phosphorylation of WNK4 in response to osmotic stress or hypotonic low-chloride stimulation via the p38 MAPK signal transduction cascade. The polypeptide is Mitogen-activated protein kinase kinase kinase 15 (MAP3K15) (Homo sapiens (Human)).